The chain runs to 51 residues: Ribosome biogenesis protein Nop10 (51 aa).

Belongs to the NOP10 family.

Functionally, involved in ribosome biogenesis; more specifically in 18S rRNA pseudouridylation and in cleavage of pre-rRNA. The polypeptide is Ribosome biogenesis protein Nop10 (Methanococcus maripaludis (strain C7 / ATCC BAA-1331)).